Consider the following 405-residue polypeptide: S-adenosylmethionine:tRNA ribosyltransferase-isomerase (405 aa).

Belongs to the QueA family. As to quaternary structure, monomer.

It is found in the cytoplasm. It catalyses the reaction 7-aminomethyl-7-carbaguanosine(34) in tRNA + S-adenosyl-L-methionine = epoxyqueuosine(34) in tRNA + adenine + L-methionine + 2 H(+). The protein operates within tRNA modification; tRNA-queuosine biosynthesis. In terms of biological role, transfers and isomerizes the ribose moiety from AdoMet to the 7-aminomethyl group of 7-deazaguanine (preQ1-tRNA) to give epoxyqueuosine (oQ-tRNA). The protein is S-adenosylmethionine:tRNA ribosyltransferase-isomerase of Psychrobacter cryohalolentis (strain ATCC BAA-1226 / DSM 17306 / VKM B-2378 / K5).